Reading from the N-terminus, the 120-residue chain is NAD(P)H-quinone oxidoreductase subunit 3 (120 aa).

The next 3 membrane-spanning stretches (helical) occupy residues 2 to 22 (FVLS…LVPI), 64 to 84 (MFAL…PWAV), and 89 to 109 (LGLL…IALV).

This sequence belongs to the complex I subunit 3 family. In terms of assembly, NDH-1 can be composed of about 15 different subunits; different subcomplexes with different compositions have been identified which probably have different functions.

It is found in the cellular thylakoid membrane. The catalysed reaction is a plastoquinone + NADH + (n+1) H(+)(in) = a plastoquinol + NAD(+) + n H(+)(out). It catalyses the reaction a plastoquinone + NADPH + (n+1) H(+)(in) = a plastoquinol + NADP(+) + n H(+)(out). NDH-1 shuttles electrons from an unknown electron donor, via FMN and iron-sulfur (Fe-S) centers, to quinones in the respiratory and/or the photosynthetic chain. The immediate electron acceptor for the enzyme in this species is believed to be plastoquinone. Couples the redox reaction to proton translocation, and thus conserves the redox energy in a proton gradient. Cyanobacterial NDH-1 also plays a role in inorganic carbon-concentration. This is NAD(P)H-quinone oxidoreductase subunit 3 from Picosynechococcus sp. (strain ATCC 27264 / PCC 7002 / PR-6) (Agmenellum quadruplicatum).